Here is a 556-residue protein sequence, read N- to C-terminus: Formate--tetrahydrofolate ligase (556 aa).

Residue 65–72 (TPAGEGKS) participates in ATP binding.

The protein belongs to the formate--tetrahydrofolate ligase family.

The catalysed reaction is (6S)-5,6,7,8-tetrahydrofolate + formate + ATP = (6R)-10-formyltetrahydrofolate + ADP + phosphate. The protein operates within one-carbon metabolism; tetrahydrofolate interconversion. This Streptococcus thermophilus (strain CNRZ 1066) protein is Formate--tetrahydrofolate ligase.